The following is a 257-amino-acid chain: Ribonuclease PH (257 aa).

Residues Arg-86 and 124-126 (GTR) contribute to the phosphate site.

The protein belongs to the RNase PH family. Homohexameric ring arranged as a trimer of dimers.

It catalyses the reaction tRNA(n+1) + phosphate = tRNA(n) + a ribonucleoside 5'-diphosphate. Its function is as follows. Phosphorolytic 3'-5' exoribonuclease that plays an important role in tRNA 3'-end maturation. Removes nucleotide residues following the 3'-CCA terminus of tRNAs; can also add nucleotides to the ends of RNA molecules by using nucleoside diphosphates as substrates, but this may not be physiologically important. Probably plays a role in initiation of 16S rRNA degradation (leading to ribosome degradation) during starvation. The protein is Ribonuclease PH of Halalkalibacterium halodurans (strain ATCC BAA-125 / DSM 18197 / FERM 7344 / JCM 9153 / C-125) (Bacillus halodurans).